Consider the following 425-residue polypeptide: Serine--tRNA ligase (425 aa).

233–235 (TAE) is an L-serine binding site. An ATP-binding site is contributed by 264–266 (RRE). E287 contributes to the L-serine binding site. ATP is bound at residue 351–354 (EISS). Position 387 (S387) interacts with L-serine.

It belongs to the class-II aminoacyl-tRNA synthetase family. Type-1 seryl-tRNA synthetase subfamily. As to quaternary structure, homodimer. The tRNA molecule binds across the dimer.

The protein resides in the cytoplasm. The enzyme catalyses tRNA(Ser) + L-serine + ATP = L-seryl-tRNA(Ser) + AMP + diphosphate + H(+). It carries out the reaction tRNA(Sec) + L-serine + ATP = L-seryl-tRNA(Sec) + AMP + diphosphate + H(+). It participates in aminoacyl-tRNA biosynthesis; selenocysteinyl-tRNA(Sec) biosynthesis; L-seryl-tRNA(Sec) from L-serine and tRNA(Sec): step 1/1. Its function is as follows. Catalyzes the attachment of serine to tRNA(Ser). Is also able to aminoacylate tRNA(Sec) with serine, to form the misacylated tRNA L-seryl-tRNA(Sec), which will be further converted into selenocysteinyl-tRNA(Sec). The chain is Serine--tRNA ligase from Thermotoga sp. (strain RQ2).